The chain runs to 688 residues: Zinc finger CCCH domain-containing protein 22 (688 aa).

The segment at 62 to 123 (ALLPPPPPPS…QPFSRSNGSV (62 aa)) is disordered. Residues 101-117 (PLSASSPSSWAQAQPFS) show a composition bias toward low complexity. The C3H1-type zinc finger occupies 233–260 (GFGWKPCLYYARGFCKNGSSCRFVHGDD). Residues 366–442 (RQIYLTFPAD…RVLVKPYKEK (77 aa)) form the RRM domain. Residues 487–522 (TNEMMLRRKLEEQQQAAELQQAIELHSRRLMDLQLL) are a coiled coil. The segment at 552–624 (LATTMVESPP…PTKSSVSAHQ (73 aa)) is disordered. The segment covering 574 to 589 (TEERKMVNGGGDKEES) has biased composition (basic and acidic residues). Residues 613-624 (ASPTKSSVSAHQ) show a composition bias toward polar residues.

The polypeptide is Zinc finger CCCH domain-containing protein 22 (Oryza sativa subsp. japonica (Rice)).